A 354-amino-acid chain; its full sequence is Endo-1,4-beta-xylanase 1 (354 aa).

One can recognise a GH10 domain in the interval 19–339 (SGLDAAMKAA…KPSYTSSLNT (321 aa)). N-linked (GlcNAc...) asparagine glycosylation is present at N117. E147 (proton donor) is an active-site residue. The active-site Nucleophile is the E261. C289 and C295 form a disulfide bridge.

Belongs to the glycosyl hydrolase 10 (cellulase F) family.

The protein resides in the secreted. The enzyme catalyses Endohydrolysis of (1-&gt;4)-beta-D-xylosidic linkages in xylans.. It participates in glycan degradation; xylan degradation. Endo-1,4-beta-xylanase involved in the hydrolysis of xylan, a major structural heterogeneous polysaccharide found in plant biomass representing the second most abundant polysaccharide in the biosphere, after cellulose. Plays an important role in causing fusarium head blight (FHB) on cereal crops. This chain is Endo-1,4-beta-xylanase 1 (XYL1), found in Gibberella zeae (strain ATCC MYA-4620 / CBS 123657 / FGSC 9075 / NRRL 31084 / PH-1) (Wheat head blight fungus).